The chain runs to 262 residues: Small ribosomal subunit protein eS1 (262 aa).

It belongs to the eukaryotic ribosomal protein eS1 family. Component of the small ribosomal subunit. Mature ribosomes consist of a small (40S) and a large (60S) subunit. The 40S subunit contains about 33 different proteins and 1 molecule of RNA (18S). The 60S subunit contains about 49 different proteins and 3 molecules of RNA (25S, 5.8S and 5S).

It is found in the cytoplasm. This is Small ribosomal subunit protein eS1 from Plasmodium knowlesi (strain H).